Consider the following 150-residue polypeptide: uncharacterized protein (150 aa).

5 repeat units span residues phenylalanine 101–asparagine 105, histidine 106–asparagine 110, histidine 111–asparagine 115, histidine 116–asparagine 120, and histidine 121–asparagine 125. Residues phenylalanine 101–asparagine 125 form a 5 X 5 AA tandem repeats of [FH]-H-[EK]-[IV]-N region.

This sequence belongs to the asfivirus D129L family.

This is an uncharacterized protein from African swine fever virus (isolate Tick/Malawi/Lil 20-1/1983) (ASFV).